We begin with the raw amino-acid sequence, 292 residues long: Carbapenem-hydrolyzing beta-lactamase transcriptional activator (292 aa).

The HTH lysR-type domain occupies 5–62; that stretch reads IPLNALRAFEASARYLNFTKAGLELHVSQAAVSQHVRTLEAILGVNLFKRLPRGLQLT. The H-T-H motif DNA-binding region spans 22–41; that stretch reads FTKAGLELHVSQAAVSQHVR.

It belongs to the LysR transcriptional regulatory family.

Functionally, this protein is a positive regulator of gene expression of carbapenem-hydrolyzing beta-lactamase (smeA). Seems to also be a repressor of its own transcription. The sequence is that of Carbapenem-hydrolyzing beta-lactamase transcriptional activator (smeR) from Serratia marcescens.